We begin with the raw amino-acid sequence, 223 residues long: Small ribosomal subunit protein uS3 (223 aa).

The region spanning 39 to 115 (IRKYIEKNLA…RVFINIVEIK (77 aa)) is the KH type-2 domain.

The protein belongs to the universal ribosomal protein uS3 family. In terms of assembly, part of the 30S ribosomal subunit. Forms a tight complex with proteins S10 and S14.

Binds the lower part of the 30S subunit head. Binds mRNA in the 70S ribosome, positioning it for translation. The sequence is that of Small ribosomal subunit protein uS3 from Leuconostoc citreum (strain KM20).